Here is a 388-residue protein sequence, read N- to C-terminus: Chorismate synthase (388 aa).

Positions 39 and 45 each coordinate NADP(+). FMN-binding positions include 130–132, 251–252, Gly296, 311–315, and Arg337; these read RSS, NA, and KPIPT.

The protein belongs to the chorismate synthase family. As to quaternary structure, homotetramer. FMNH2 serves as cofactor.

The catalysed reaction is 5-O-(1-carboxyvinyl)-3-phosphoshikimate = chorismate + phosphate. It functions in the pathway metabolic intermediate biosynthesis; chorismate biosynthesis; chorismate from D-erythrose 4-phosphate and phosphoenolpyruvate: step 7/7. Catalyzes the anti-1,4-elimination of the C-3 phosphate and the C-6 proR hydrogen from 5-enolpyruvylshikimate-3-phosphate (EPSP) to yield chorismate, which is the branch point compound that serves as the starting substrate for the three terminal pathways of aromatic amino acid biosynthesis. This reaction introduces a second double bond into the aromatic ring system. This chain is Chorismate synthase, found in Lactococcus lactis subsp. cremoris (strain MG1363).